The primary structure comprises 422 residues: Mitochondrial distribution and morphology protein 12 (422 aa).

The region spanning 1–386 (MSFDINWNQL…WPSWICIDMN (386 aa)) is the SMP-LTD domain. Disordered stretches follow at residues 74 to 134 (GATN…HDLG) and 387 to 422 (DDGDDDDDDEVEDSNVSDGDGKDNDGKHGDGPTHEV). Acidic residues-rich tracts occupy residues 109 to 130 (FDDDDDDDEGVDEDDDDDEYDD) and 387 to 401 (DDGDDDDDDEVEDSN). The segment covering 405–422 (GDGKDNDGKHGDGPTHEV) has biased composition (basic and acidic residues).

The protein belongs to the MDM12 family. In terms of assembly, component of the ER-mitochondria encounter structure (ERMES) or MDM complex, composed of MMM1, MDM10, MDM12 and MDM34. An MMM1 homodimer associates with one molecule of MDM12 on each side in a pairwise head-to-tail manner, and the SMP-LTD domains of MMM1 and MDM12 generate a continuous hydrophobic tunnel for phospholipid trafficking.

It is found in the mitochondrion outer membrane. The protein localises to the endoplasmic reticulum membrane. Its function is as follows. Component of the ERMES/MDM complex, which serves as a molecular tether to connect the endoplasmic reticulum (ER) and mitochondria. Components of this complex are involved in the control of mitochondrial shape and protein biogenesis, and function in nonvesicular lipid trafficking between the ER and mitochondria. MDM12 is required for the interaction of the ER-resident membrane protein MMM1 and the outer mitochondrial membrane-resident beta-barrel protein MDM10. The MDM12-MMM1 subcomplex functions in the major beta-barrel assembly pathway that is responsible for biogenesis of all mitochondrial outer membrane beta-barrel proteins, and acts in a late step after the SAM complex. The MDM10-MDM12-MMM1 subcomplex further acts in the TOM40-specific pathway after the action of the MDM12-MMM1 complex. Essential for establishing and maintaining the structure of mitochondria and maintenance of mtDNA nucleoids. This Candida dubliniensis (strain CD36 / ATCC MYA-646 / CBS 7987 / NCPF 3949 / NRRL Y-17841) (Yeast) protein is Mitochondrial distribution and morphology protein 12.